We begin with the raw amino-acid sequence, 286 residues long: Aspartate-semialdehyde dehydrogenase (286 aa).

NADP(+) is bound by residues 10 to 13 (RGMV), 37 to 38 (TS), and Gln-74. Arg-103 contacts phosphate. The active-site Acyl-thioester intermediate is Cys-136. Residue Gln-163 participates in substrate binding. NADP(+) contacts are provided by residues 166–167 (SG) and Pro-194. Glu-242 is a binding site for substrate. A phosphate-binding site is contributed by Lys-245. Arg-269 is a substrate binding site. The Proton acceptor role is filled by His-276.

Belongs to the aspartate-semialdehyde dehydrogenase family. As to quaternary structure, homodimer.

The enzyme catalyses L-aspartate 4-semialdehyde + phosphate + NADP(+) = 4-phospho-L-aspartate + NADPH + H(+). It participates in amino-acid biosynthesis; L-lysine biosynthesis via DAP pathway; (S)-tetrahydrodipicolinate from L-aspartate: step 2/4. The protein operates within amino-acid biosynthesis; L-methionine biosynthesis via de novo pathway; L-homoserine from L-aspartate: step 2/3. Its pathway is amino-acid biosynthesis; L-threonine biosynthesis; L-threonine from L-aspartate: step 2/5. Catalyzes the NADPH-dependent formation of L-aspartate-semialdehyde (L-ASA) by the reductive dephosphorylation of L-aspartyl-4-phosphate. The protein is Aspartate-semialdehyde dehydrogenase (asd) of Actinobacillus pleuropneumoniae (Haemophilus pleuropneumoniae).